Consider the following 497-residue polypeptide: Glycerol kinase (497 aa).

Residue Thr11 coordinates ADP. ATP contacts are provided by Thr11, Ser12, and Ser13. Sn-glycerol 3-phosphate is bound at residue Thr11. Arg15 lines the ADP pocket. Residues Arg81, Glu82, Tyr133, and Asp242 each contribute to the sn-glycerol 3-phosphate site. Glycerol contacts are provided by Arg81, Glu82, Tyr133, Asp242, and Gln243. Residues Thr264 and Gly307 each contribute to the ADP site. Residues Thr264, Gly307, Gln311, and Gly412 each coordinate ATP. ADP contacts are provided by Gly412 and Asn416.

It belongs to the FGGY kinase family.

The enzyme catalyses glycerol + ATP = sn-glycerol 3-phosphate + ADP + H(+). It participates in polyol metabolism; glycerol degradation via glycerol kinase pathway; sn-glycerol 3-phosphate from glycerol: step 1/1. Inhibited by fructose 1,6-bisphosphate (FBP). Functionally, key enzyme in the regulation of glycerol uptake and metabolism. Catalyzes the phosphorylation of glycerol to yield sn-glycerol 3-phosphate. This Leptothrix cholodnii (strain ATCC 51168 / LMG 8142 / SP-6) (Leptothrix discophora (strain SP-6)) protein is Glycerol kinase.